We begin with the raw amino-acid sequence, 356 residues long: Holliday junction branch migration complex subunit RuvB (356 aa).

Residues 4 to 190 form a large ATPase domain (RuvB-L) region; it reads TDKLAAERII…FGIVARLEFY (187 aa). ATP contacts are provided by residues leucine 29, arginine 30, glycine 71, lysine 74, threonine 75, threonine 76, 137-139, arginine 180, tyrosine 190, and arginine 227; that span reads EDY. Mg(2+) is bound at residue threonine 75. Residues 191-261 are small ATPAse domain (RuvB-S); the sequence is DAEQLSRIVR…VADAALAMLD (71 aa). Residues 264 to 356 are head domain (RuvB-H); it reads PVGFDLMDRK…NLWDTPDAEC (93 aa). 3 residues coordinate DNA: arginine 300, arginine 319, and arginine 324.

This sequence belongs to the RuvB family. Homohexamer. Forms an RuvA(8)-RuvB(12)-Holliday junction (HJ) complex. HJ DNA is sandwiched between 2 RuvA tetramers; dsDNA enters through RuvA and exits via RuvB. An RuvB hexamer assembles on each DNA strand where it exits the tetramer. Each RuvB hexamer is contacted by two RuvA subunits (via domain III) on 2 adjacent RuvB subunits; this complex drives branch migration. In the full resolvosome a probable DNA-RuvA(4)-RuvB(12)-RuvC(2) complex forms which resolves the HJ.

Its subcellular location is the cytoplasm. It carries out the reaction ATP + H2O = ADP + phosphate + H(+). The RuvA-RuvB-RuvC complex processes Holliday junction (HJ) DNA during genetic recombination and DNA repair, while the RuvA-RuvB complex plays an important role in the rescue of blocked DNA replication forks via replication fork reversal (RFR). RuvA specifically binds to HJ cruciform DNA, conferring on it an open structure. The RuvB hexamer acts as an ATP-dependent pump, pulling dsDNA into and through the RuvAB complex. RuvB forms 2 homohexamers on either side of HJ DNA bound by 1 or 2 RuvA tetramers; 4 subunits per hexamer contact DNA at a time. Coordinated motions by a converter formed by DNA-disengaged RuvB subunits stimulates ATP hydrolysis and nucleotide exchange. Immobilization of the converter enables RuvB to convert the ATP-contained energy into a lever motion, pulling 2 nucleotides of DNA out of the RuvA tetramer per ATP hydrolyzed, thus driving DNA branch migration. The RuvB motors rotate together with the DNA substrate, which together with the progressing nucleotide cycle form the mechanistic basis for DNA recombination by continuous HJ branch migration. Branch migration allows RuvC to scan DNA until it finds its consensus sequence, where it cleaves and resolves cruciform DNA. This Burkholderia pseudomallei (strain 668) protein is Holliday junction branch migration complex subunit RuvB.